A 217-amino-acid chain; its full sequence is Probable transaldolase (217 aa).

K83 functions as the Schiff-base intermediate with substrate in the catalytic mechanism.

It belongs to the transaldolase family. Type 3B subfamily.

The protein localises to the cytoplasm. It catalyses the reaction D-sedoheptulose 7-phosphate + D-glyceraldehyde 3-phosphate = D-erythrose 4-phosphate + beta-D-fructose 6-phosphate. It participates in carbohydrate degradation; pentose phosphate pathway; D-glyceraldehyde 3-phosphate and beta-D-fructose 6-phosphate from D-ribose 5-phosphate and D-xylulose 5-phosphate (non-oxidative stage): step 2/3. In terms of biological role, transaldolase is important for the balance of metabolites in the pentose-phosphate pathway. In Phenylobacterium zucineum (strain HLK1), this protein is Probable transaldolase.